The chain runs to 217 residues: Translation initiation factor 6 (217 aa).

Belongs to the eIF-6 family.

In terms of biological role, binds to the 50S ribosomal subunit and prevents its association with the 30S ribosomal subunit to form the 70S initiation complex. This is Translation initiation factor 6 from Picrophilus torridus (strain ATCC 700027 / DSM 9790 / JCM 10055 / NBRC 100828 / KAW 2/3).